Reading from the N-terminus, the 264-residue chain is 3-methyl-2-oxobutanoate hydroxymethyltransferase (264 aa).

Residues aspartate 45 and aspartate 84 each contribute to the Mg(2+) site. 3-methyl-2-oxobutanoate-binding positions include 45–46 (DS), aspartate 84, and lysine 112. Glutamate 114 contacts Mg(2+). Residue glutamate 181 is the Proton acceptor of the active site.

The protein belongs to the PanB family. In terms of assembly, homodecamer; pentamer of dimers. Mg(2+) serves as cofactor.

The protein localises to the cytoplasm. It carries out the reaction 3-methyl-2-oxobutanoate + (6R)-5,10-methylene-5,6,7,8-tetrahydrofolate + H2O = 2-dehydropantoate + (6S)-5,6,7,8-tetrahydrofolate. The protein operates within cofactor biosynthesis; (R)-pantothenate biosynthesis; (R)-pantoate from 3-methyl-2-oxobutanoate: step 1/2. Catalyzes the reversible reaction in which hydroxymethyl group from 5,10-methylenetetrahydrofolate is transferred onto alpha-ketoisovalerate to form ketopantoate. In Pseudoalteromonas translucida (strain TAC 125), this protein is 3-methyl-2-oxobutanoate hydroxymethyltransferase.